The following is a 156-amino-acid chain: FAD synthase (156 aa).

ATP is bound by residues 9–10, 14–17, asparagine 92, and histidine 119; these read TF and HPGH.

Belongs to the archaeal FAD synthase family. As to quaternary structure, homodimer. The cofactor is a divalent metal cation.

The catalysed reaction is FMN + ATP + H(+) = FAD + diphosphate. It participates in cofactor biosynthesis; FAD biosynthesis; FAD from FMN: step 1/1. Its function is as follows. Catalyzes the transfer of the AMP portion of ATP to flavin mononucleotide (FMN) to produce flavin adenine dinucleotide (FAD) coenzyme. This is FAD synthase from Methanospirillum hungatei JF-1 (strain ATCC 27890 / DSM 864 / NBRC 100397 / JF-1).